The primary structure comprises 257 residues: Peptide methionine sulfoxide reductase (257 aa).

Residues 61–88 (LGFGSRPQPDPAASSAIAQGPDDDVPSP) are disordered. Serine 244 bears the Phosphoserine mark.

This sequence belongs to the MsrA Met sulfoxide reductase family.

It carries out the reaction L-methionyl-[protein] + [thioredoxin]-disulfide + H2O = L-methionyl-(S)-S-oxide-[protein] + [thioredoxin]-dithiol. The enzyme catalyses [thioredoxin]-disulfide + L-methionine + H2O = L-methionine (S)-S-oxide + [thioredoxin]-dithiol. Has an important function as a repair enzyme for proteins that have been inactivated by oxidation. Catalyzes the reversible oxidation-reduction of methionine sulfoxide in proteins to methionine. This is Peptide methionine sulfoxide reductase (PMSR) from Brassica napus (Rape).